The primary structure comprises 313 residues: Porphobilinogen deaminase (313 aa).

Cys-241 is subject to S-(dipyrrolylmethanemethyl)cysteine.

The protein belongs to the HMBS family. In terms of assembly, monomer. It depends on dipyrromethane as a cofactor.

It catalyses the reaction 4 porphobilinogen + H2O = hydroxymethylbilane + 4 NH4(+). It participates in porphyrin-containing compound metabolism; protoporphyrin-IX biosynthesis; coproporphyrinogen-III from 5-aminolevulinate: step 2/4. Its function is as follows. Tetrapolymerization of the monopyrrole PBG into the hydroxymethylbilane pre-uroporphyrinogen in several discrete steps. The protein is Porphobilinogen deaminase of Sulfurimonas denitrificans (strain ATCC 33889 / DSM 1251) (Thiomicrospira denitrificans (strain ATCC 33889 / DSM 1251)).